We begin with the raw amino-acid sequence, 268 residues long: Thiazole synthase (268 aa).

The active-site Schiff-base intermediate with DXP is the Lys108. 1-deoxy-D-xylulose 5-phosphate-binding positions include Gly169, 195–196 (AG), and 217–218 (NS). The segment at 248–268 (RLKENPLASPSSPLEGVISNN) is disordered. Polar residues predominate over residues 255–268 (ASPSSPLEGVISNN).

It belongs to the ThiG family. As to quaternary structure, homotetramer. Forms heterodimers with either ThiH or ThiS.

It is found in the cytoplasm. It carries out the reaction [ThiS sulfur-carrier protein]-C-terminal-Gly-aminoethanethioate + 2-iminoacetate + 1-deoxy-D-xylulose 5-phosphate = [ThiS sulfur-carrier protein]-C-terminal Gly-Gly + 2-[(2R,5Z)-2-carboxy-4-methylthiazol-5(2H)-ylidene]ethyl phosphate + 2 H2O + H(+). It functions in the pathway cofactor biosynthesis; thiamine diphosphate biosynthesis. Its function is as follows. Catalyzes the rearrangement of 1-deoxy-D-xylulose 5-phosphate (DXP) to produce the thiazole phosphate moiety of thiamine. Sulfur is provided by the thiocarboxylate moiety of the carrier protein ThiS. In vitro, sulfur can be provided by H(2)S. The protein is Thiazole synthase of Prochlorococcus marinus (strain NATL1A).